Consider the following 334-residue polypeptide: Protein-methionine-sulfoxide reductase catalytic subunit MsrP (334 aa).

A signal peptide (tat-type signal) is located at residues 1–44 (MKKNQFLKESDVTAESVFFMKRRQVLKALGISAAALSLPHAAHA). Residues asparagine 88, 91 to 92 (YE), cysteine 146, threonine 181, asparagine 233, arginine 238, and 249 to 251 (GIK) contribute to the Mo-molybdopterin site.

Belongs to the MsrP family. As to quaternary structure, heterodimer of a catalytic subunit (MsrP) and a heme-binding subunit (MsrQ). Mo-molybdopterin is required as a cofactor. Post-translationally, predicted to be exported by the Tat system. The position of the signal peptide cleavage has not been experimentally proven.

It localises to the periplasm. It carries out the reaction L-methionyl-[protein] + a quinone + H2O = L-methionyl-(S)-S-oxide-[protein] + a quinol. It catalyses the reaction L-methionyl-[protein] + a quinone + H2O = L-methionyl-(R)-S-oxide-[protein] + a quinol. Its function is as follows. Part of the MsrPQ system that repairs oxidized periplasmic proteins containing methionine sulfoxide residues (Met-O), using respiratory chain electrons. Thus protects these proteins from oxidative-stress damage caused by reactive species of oxygen and chlorine generated by the host defense mechanisms. MsrPQ is essential for the maintenance of envelope integrity under bleach stress, rescuing a wide series of structurally unrelated periplasmic proteins from methionine oxidation, including the primary periplasmic chaperone SurA and the lipoprotein Pal. The catalytic subunit MsrP is non-stereospecific, being able to reduce both (R-) and (S-) diastereoisomers of methionine sulfoxide. This is Protein-methionine-sulfoxide reductase catalytic subunit MsrP from Escherichia coli O81 (strain ED1a).